Consider the following 610-residue polypeptide: UvrABC system protein C (610 aa).

One can recognise a GIY-YIG domain in the interval His-13 to Val-91. The region spanning Gly-201–Val-236 is the UVR domain.

The protein belongs to the UvrC family. As to quaternary structure, interacts with UvrB in an incision complex.

It is found in the cytoplasm. In terms of biological role, the UvrABC repair system catalyzes the recognition and processing of DNA lesions. UvrC both incises the 5' and 3' sides of the lesion. The N-terminal half is responsible for the 3' incision and the C-terminal half is responsible for the 5' incision. The polypeptide is UvrABC system protein C (Actinobacillus pleuropneumoniae serotype 5b (strain L20)).